The primary structure comprises 191 residues: Shikimate kinase (191 aa).

Position 14–19 (G14–T19) interacts with ATP. S18 serves as a coordination point for Mg(2+). Substrate is bound by residues D36, R60, and G82. R120 contacts ATP. Residue R147 coordinates substrate.

This sequence belongs to the shikimate kinase family. Monomer. Mg(2+) is required as a cofactor.

Its subcellular location is the cytoplasm. It carries out the reaction shikimate + ATP = 3-phosphoshikimate + ADP + H(+). It functions in the pathway metabolic intermediate biosynthesis; chorismate biosynthesis; chorismate from D-erythrose 4-phosphate and phosphoenolpyruvate: step 5/7. Catalyzes the specific phosphorylation of the 3-hydroxyl group of shikimic acid using ATP as a cosubstrate. This Chlorobaculum tepidum (strain ATCC 49652 / DSM 12025 / NBRC 103806 / TLS) (Chlorobium tepidum) protein is Shikimate kinase.